A 187-amino-acid polypeptide reads, in one-letter code: Homeobox protein engrailed-like ceh-16 (187 aa).

3 disordered regions span residues 14–43 (PYPC…NGTP), 60–100 (SDRP…DQLD), and 144–167 (KSTS…HPSI). The segment covering 20–39 (PTISTPATSPSSISPTFASP) has biased composition (low complexity). The segment at residues 87-146 (EKRPRTAFTGDQLDRLKTEFRESRYLTEKRRQELAHELGLNESQIKIWFQNKRAKLKKST) is a DNA-binding region (homeobox). Over residues 145–163 (STSSVPRDRCSSVTPNPHN) the composition is skewed to polar residues.

It belongs to the engrailed homeobox family. As to expression, expressed in seam cells.

The protein localises to the nucleus. It localises to the cytoplasm. In terms of biological role, transcriptional regulator which binds to DNA to regulate gene expression and promote seam cell development and differentiation during embryogenesis. Plays a role in maintaining the boundaries between the lateral rows of seam cells and the ventral and dorsal row of epidermal cells during embryonic development. Negatively regulates the expression of the fusion effector protein eff-1 to prevent seam cell fusion with the dorsal and ventral epidermal cells during embryonic elongation. Positively regulates seam cell self-renewal and expansion during the L2 larval stage to promote seam cell development. This role does not seem to be via regulation of eff-1 expression. Specifically, it is required for the asymmetric division of the V5.p seam cell during the L2 larval stage, and in turn the asymmetric nuclear distribution of pop-1 in V5.p daughter cells. The protein is Homeobox protein engrailed-like ceh-16 of Caenorhabditis elegans.